We begin with the raw amino-acid sequence, 105 residues long: Large ribosomal subunit protein eL42 (105 aa).

The tract at residues 23–61 (KVTQYKKGKESKFAQGRRRYDRKQSGFGGQTKPIFRKKA) is disordered.

The protein belongs to the eukaryotic ribosomal protein eL42 family.

In Caenorhabditis elegans, this protein is Large ribosomal subunit protein eL42.